Here is a 219-residue protein sequence, read N- to C-terminus: Orotidine 5'-phosphate decarboxylase (219 aa).

Substrate is bound by residues D10, K32, 58-67, S113, 163-173, G186, and R187; these read DFKVADIPYT and PGIGAQGGDPY. The Proton donor role is filled by K60.

This sequence belongs to the OMP decarboxylase family. Type 1 subfamily. Homodimer.

It carries out the reaction orotidine 5'-phosphate + H(+) = UMP + CO2. It participates in pyrimidine metabolism; UMP biosynthesis via de novo pathway; UMP from orotate: step 2/2. Its function is as follows. Catalyzes the decarboxylation of orotidine 5'-monophosphate (OMP) to uridine 5'-monophosphate (UMP). This is Orotidine 5'-phosphate decarboxylase from Thermoplasma volcanium (strain ATCC 51530 / DSM 4299 / JCM 9571 / NBRC 15438 / GSS1).